A 314-amino-acid polypeptide reads, in one-letter code: Small ribosomal subunit protein uS11m (314 aa).

The N-terminal 37 residues, Met1–Ser37, are a transit peptide targeting the mitochondrion. Residues Asp34–Ser138 are disordered. The segment covering Glu50 to Ile63 has biased composition (polar residues). Over residues Ser103 to Pro114 the composition is skewed to low complexity.

Belongs to the universal ribosomal protein uS11 family. Component of the mitochondrial ribosome small subunit (28S) which comprises a 12S rRNA and about 30 distinct proteins.

It is found in the mitochondrion. Functionally, required for karyogamy during female gametophyte development, when the two polar nuclei fuse to form the diploid central cell nucleus. This is Small ribosomal subunit protein uS11m from Arabidopsis thaliana (Mouse-ear cress).